The chain runs to 505 residues: ATP synthase subunit beta, mitochondrial (505 aa).

An ATP-binding site is contributed by 184–191; sequence GGAGVGKT.

It belongs to the ATPase alpha/beta chains family. As to quaternary structure, F-type ATPases have 2 components, CF(1) - the catalytic core - and CF(0) - the membrane proton channel. CF(1) has five subunits: alpha(3), beta(3), gamma(1), delta(1), epsilon(1). CF(0) has three main subunits: a, b and c.

The protein resides in the mitochondrion. It is found in the mitochondrion inner membrane. It carries out the reaction ATP + H2O + 4 H(+)(in) = ADP + phosphate + 5 H(+)(out). Functionally, mitochondrial membrane ATP synthase (F(1)F(0) ATP synthase or Complex V) produces ATP from ADP in the presence of a proton gradient across the membrane which is generated by electron transport complexes of the respiratory chain. F-type ATPases consist of two structural domains, F(1) - containing the extramembraneous catalytic core, and F(0) - containing the membrane proton channel, linked together by a central stalk and a peripheral stalk. During catalysis, ATP synthesis in the catalytic domain of F(1) is coupled via a rotary mechanism of the central stalk subunits to proton translocation. Subunits alpha and beta form the catalytic core in F(1). Rotation of the central stalk against the surrounding alpha(3)beta(3) subunits leads to hydrolysis of ATP in three separate catalytic sites on the beta subunits. The sequence is that of ATP synthase subunit beta, mitochondrial (ATP2) from Kluyveromyces lactis (strain ATCC 8585 / CBS 2359 / DSM 70799 / NBRC 1267 / NRRL Y-1140 / WM37) (Yeast).